Consider the following 725-residue polypeptide: 1,4-alpha-glucan branching enzyme GlgB (725 aa).

D403 (nucleophile) is an active-site residue. E456 acts as the Proton donor in catalysis.

This sequence belongs to the glycosyl hydrolase 13 family. GlgB subfamily. In terms of assembly, monomer.

It carries out the reaction Transfers a segment of a (1-&gt;4)-alpha-D-glucan chain to a primary hydroxy group in a similar glucan chain.. Its pathway is glycan biosynthesis; glycogen biosynthesis. Its function is as follows. Catalyzes the formation of the alpha-1,6-glucosidic linkages in glycogen by scission of a 1,4-alpha-linked oligosaccharide from growing alpha-1,4-glucan chains and the subsequent attachment of the oligosaccharide to the alpha-1,6 position. The protein is 1,4-alpha-glucan branching enzyme GlgB of Pectobacterium atrosepticum (strain SCRI 1043 / ATCC BAA-672) (Erwinia carotovora subsp. atroseptica).